The following is a 338-amino-acid chain: Protein WVD2-like 2 (338 aa).

Basic and acidic residues predominate over residues 1-14 (MGRELVDKHMDKKA). Residues 1 to 150 (MGRELVDKHM…SFSVASSSAT (150 aa)) are disordered. 2 stretches are compositionally biased toward polar residues: residues 15–37 (NSLT…STNE) and 59–69 (QGITETPGSHK). The segment covering 100 to 115 (NNSLGNGASHNSSSAS) has biased composition (low complexity). Residues 128 to 138 (RIPDHKMHHDE) show a composition bias toward basic and acidic residues. The stretch at 177 to 214 (REFYQKLEEKQKALEAEKRENEKRLKEEQEAVTKQLRK) forms a coiled coil. The tract at residues 222-338 (PVPSFYQEGP…GENGVGVVEE (117 aa)) is disordered. Residues 288–300 (TNSVPRTPNSSSK) show a composition bias toward polar residues.

This sequence belongs to the TPX2 family. Expressed in seedlings.

It is found in the cytoplasm. Its subcellular location is the cytoskeleton. In terms of biological role, microtubule-associated protein (MAP) that regulates the orientation of interphase cortical microtubules. This Arabidopsis thaliana (Mouse-ear cress) protein is Protein WVD2-like 2.